Consider the following 62-residue polypeptide: DNA-directed RNA polymerase subunit Rpo10 (62 aa).

Residues cysteine 6, cysteine 9, cysteine 43, and cysteine 44 each coordinate Zn(2+).

The protein belongs to the archaeal Rpo10/eukaryotic RPB10 RNA polymerase subunit family. Part of the RNA polymerase complex. Requires Zn(2+) as cofactor.

The protein localises to the cytoplasm. The catalysed reaction is RNA(n) + a ribonucleoside 5'-triphosphate = RNA(n+1) + diphosphate. DNA-dependent RNA polymerase (RNAP) catalyzes the transcription of DNA into RNA using the four ribonucleoside triphosphates as substrates. This chain is DNA-directed RNA polymerase subunit Rpo10, found in Methanoculleus marisnigri (strain ATCC 35101 / DSM 1498 / JR1).